The sequence spans 404 residues: Ethanolamine-phosphate cytidylyltransferase (404 aa).

Residues 173–201 are disordered; the sequence is YADSFGKPPHPTPAGDTLSSEVSSQCPGG. A compositionally biased stretch (polar residues) spans 189 to 201; sequence TLSSEVSSQCPGG. CTP-binding positions include 239 to 240, 247 to 250, Lys-277, 325 to 328, and 354 to 358; these read AF, HVDF, HGKT, and SGSDL. Ser-356 bears the Phosphoserine mark. Phosphothreonine occurs at positions 359 and 360.

The protein belongs to the cytidylyltransferase family.

It catalyses the reaction phosphoethanolamine + CTP + H(+) = CDP-ethanolamine + diphosphate. The protein operates within phospholipid metabolism; phosphatidylethanolamine biosynthesis; phosphatidylethanolamine from ethanolamine: step 2/3. Its function is as follows. Ethanolamine-phosphate cytidylyltransferase that catalyzes the second step in the synthesis of phosphatidylethanolamine (PE) from ethanolamine via the CDP-ethanolamine pathway. Phosphatidylethanolamine is a dominant inner-leaflet phospholipid in cell membranes, where it plays a role in membrane function by structurally stabilizing membrane-anchored proteins, and participates in important cellular processes such as cell division, cell fusion, blood coagulation, and apoptosis. The sequence is that of Ethanolamine-phosphate cytidylyltransferase (Pcyt2) from Mus musculus (Mouse).